An 82-amino-acid chain; its full sequence is Small ribosomal subunit protein bS18 (82 aa).

The interval 1-25 (MADTSSSQARRPFHRRRKTCPFSGA) is disordered.

The protein belongs to the bacterial ribosomal protein bS18 family. Part of the 30S ribosomal subunit. Forms a tight heterodimer with protein bS6.

In terms of biological role, binds as a heterodimer with protein bS6 to the central domain of the 16S rRNA, where it helps stabilize the platform of the 30S subunit. This chain is Small ribosomal subunit protein bS18, found in Agrobacterium fabrum (strain C58 / ATCC 33970) (Agrobacterium tumefaciens (strain C58)).